A 253-amino-acid polypeptide reads, in one-letter code: Aspartic acid-rich protein (253 aa).

The signal sequence occupies residues 1-22; that stretch reads MYLFIYIFFFFFFFFFFVIVQK. The disordered stretch occupies residues 211-253; that stretch reads DDFDEEFDDDDDDDDDDDDDDDDDDKDDDLDGDDDGNNDDNDD.

Belongs to the nucleosome assembly protein (NAP) family.

In Plasmodium falciparum (isolate fcm17 / Senegal), this protein is Aspartic acid-rich protein.